A 150-amino-acid chain; its full sequence is Large ribosomal subunit protein uL15 (150 aa).

Residues 1–60 form a disordered region; the sequence is MKLSDLRPNPGANKRRKRVGRGPGSGHGKTATRGHKGQKSRSGGLKDPRRFEGGRSTTLM. Residues 30-39 show a composition bias toward basic residues; it reads TATRGHKGQK. Positions 44–53 are enriched in basic and acidic residues; it reads GLKDPRRFEG.

The protein belongs to the universal ribosomal protein uL15 family. As to quaternary structure, part of the 50S ribosomal subunit.

Its function is as follows. Binds to the 23S rRNA. This Thermus thermophilus (strain ATCC BAA-163 / DSM 7039 / HB27) protein is Large ribosomal subunit protein uL15.